The chain runs to 350 residues: S-adenosylmethionine:tRNA ribosyltransferase-isomerase (350 aa).

Belongs to the QueA family. As to quaternary structure, monomer.

The protein resides in the cytoplasm. The catalysed reaction is 7-aminomethyl-7-carbaguanosine(34) in tRNA + S-adenosyl-L-methionine = epoxyqueuosine(34) in tRNA + adenine + L-methionine + 2 H(+). Its pathway is tRNA modification; tRNA-queuosine biosynthesis. Transfers and isomerizes the ribose moiety from AdoMet to the 7-aminomethyl group of 7-deazaguanine (preQ1-tRNA) to give epoxyqueuosine (oQ-tRNA). The polypeptide is S-adenosylmethionine:tRNA ribosyltransferase-isomerase (Vibrio vulnificus (strain YJ016)).